The chain runs to 425 residues: 3-phosphoshikimate 1-carboxyvinyltransferase (425 aa).

3-phosphoshikimate contacts are provided by lysine 20, serine 21, and arginine 25. Lysine 20 lines the phosphoenolpyruvate pocket. Phosphoenolpyruvate-binding residues include glycine 92 and arginine 120. 3-phosphoshikimate contacts are provided by serine 165, glutamine 167, aspartate 312, and lysine 339. Glutamine 167 is a phosphoenolpyruvate binding site. Aspartate 312 (proton acceptor) is an active-site residue. Positions 343 and 385 each coordinate phosphoenolpyruvate.

This sequence belongs to the EPSP synthase family. In terms of assembly, monomer.

Its subcellular location is the cytoplasm. The catalysed reaction is 3-phosphoshikimate + phosphoenolpyruvate = 5-O-(1-carboxyvinyl)-3-phosphoshikimate + phosphate. It functions in the pathway metabolic intermediate biosynthesis; chorismate biosynthesis; chorismate from D-erythrose 4-phosphate and phosphoenolpyruvate: step 6/7. In terms of biological role, catalyzes the transfer of the enolpyruvyl moiety of phosphoenolpyruvate (PEP) to the 5-hydroxyl of shikimate-3-phosphate (S3P) to produce enolpyruvyl shikimate-3-phosphate and inorganic phosphate. The polypeptide is 3-phosphoshikimate 1-carboxyvinyltransferase (Alkaliphilus metalliredigens (strain QYMF)).